The following is a 69-amino-acid chain: Cytochrome c oxidase subunit 8A, mitochondrial (69 aa).

The N-terminal 25 residues, 1–25, are a transit peptide targeting the mitochondrion; it reads MSVLTPLLLRGLTGPARRLPVPRAQ. Residues 2-19 carry the SIFI-degron motif; that stretch reads SVLTPLLLRGLTGPARRL. At 26–36 the chain is on the mitochondrial matrix side; that stretch reads IHSKPPREQLG. Residues 37–60 form a helical membrane-spanning segment; the sequence is TMDIAIGLTSCFLCFLLPSGWVLS. The Mitochondrial intermembrane portion of the chain corresponds to 61–69; sequence HMENYKKRE.

Belongs to the cytochrome c oxidase VIII family. In terms of assembly, component of the cytochrome c oxidase (complex IV, CIV), a multisubunit enzyme composed of 14 subunits. The complex is composed of a catalytic core of 3 subunits MT-CO1, MT-CO2 and MT-CO3, encoded in the mitochondrial DNA, and 11 supernumerary subunits COX4I1 (or COX4I2), COX5A, COX5B, COX6A2 (or COX6A1), COX6B1 (or COX6B2), COX6C, COX7A1 (or COX7A2), COX7B, COX7C, COX8B and NDUFA4, which are encoded in the nuclear genome. The complex exists as a monomer or a dimer and forms supercomplexes (SCs) in the inner mitochondrial membrane with NADH-ubiquinone oxidoreductase (complex I, CI) and ubiquinol-cytochrome c oxidoreductase (cytochrome b-c1 complex, complex III, CIII), resulting in different assemblies (supercomplex SCI(1)III(2)IV(1) and megacomplex MCI(2)III(2)IV(2)). Post-translationally, in response to mitochondrial stress, the precursor protein is ubiquitinated by the SIFI complex in the cytoplasm before mitochondrial import, leading to its degradation. Within the SIFI complex, UBR4 initiates ubiquitin chain that are further elongated or branched by KCMF1.

It is found in the mitochondrion inner membrane. The protein operates within energy metabolism; oxidative phosphorylation. Its function is as follows. Component of the cytochrome c oxidase, the last enzyme in the mitochondrial electron transport chain which drives oxidative phosphorylation. The respiratory chain contains 3 multisubunit complexes succinate dehydrogenase (complex II, CII), ubiquinol-cytochrome c oxidoreductase (cytochrome b-c1 complex, complex III, CIII) and cytochrome c oxidase (complex IV, CIV), that cooperate to transfer electrons derived from NADH and succinate to molecular oxygen, creating an electrochemical gradient over the inner membrane that drives transmembrane transport and the ATP synthase. Cytochrome c oxidase is the component of the respiratory chain that catalyzes the reduction of oxygen to water. Electrons originating from reduced cytochrome c in the intermembrane space (IMS) are transferred via the dinuclear copper A center (CU(A)) of subunit 2 and heme A of subunit 1 to the active site in subunit 1, a binuclear center (BNC) formed by heme A3 and copper B (CU(B)). The BNC reduces molecular oxygen to 2 water molecules using 4 electrons from cytochrome c in the IMS and 4 protons from the mitochondrial matrix. The polypeptide is Cytochrome c oxidase subunit 8A, mitochondrial (COX8A) (Bos taurus (Bovine)).